The primary structure comprises 396 residues: MIISAASDYRAAAQRILPPFLFHYMDGGAYSEYTLRRNVEDLSEVALRQRILKNMSDLSLETTLFNEKLSMPVALAPVGLCGMYARRGEVQAAKAADAHGIPFTLSTVSVCPIEEVAPAIKRPMWFQLYVLRDRGFMRNALERAKAAGCSTLVFTVDMPTPGARYRDAHSGMSGPNAAMRRYLQAVTHPQWAWDVGLNGRPHDLGNISAYLGKPTGLEDYIGWLGNNFDPSISWKDLEWIRDFWDGPMVIKGILDPEDARDAVRFGADGIVVSNHGGRQLDGVLSSARALPAIADAVKGDIAILADSGIRNGLDVVRMIALGADTVLLGRAFLYALATAGQAGVANLLNLIEKEMKVAMTLTGAKSISEITQDSLVQGLGKELPTALAPMAKGNAA.

Residues 1–380 enclose the FMN hydroxy acid dehydrogenase domain; that stretch reads MIISAASDYR…TQDSLVQGLG (380 aa). A substrate-binding site is contributed by Y24. FMN-binding residues include S106 and Q127. Y129 lines the substrate pocket. T155 is an FMN binding site. Position 164 (R164) interacts with substrate. K251 is a binding site for FMN. H275 serves as the catalytic Proton acceptor. R278 lines the substrate pocket. 306-330 contacts FMN; that stretch reads DSGIRNGLDVVRMIALGADTVLLGR.

The protein belongs to the FMN-dependent alpha-hydroxy acid dehydrogenase family. FMN is required as a cofactor.

Its subcellular location is the cell inner membrane. It carries out the reaction (S)-lactate + A = pyruvate + AH2. Catalyzes the conversion of L-lactate to pyruvate. Is coupled to the respiratory chain. The protein is L-lactate dehydrogenase of Shigella flexneri serotype 5b (strain 8401).